Reading from the N-terminus, the 406-residue chain is MNLALGILEKRGFLKQCTNLEALSVLMDREKMVFYVGVDATSTSLHIGHLIPFMAMAHLQRQGHIPIALVGGGTTKIGDPSGKDVMRKILPKEDIEANVKAIKEQLLRIIDFSHGYIIDNSEWLDNINYIEFLRDIGVYFSVNRMLGFETYKRRLKDGLSFIEFNYQLLQSYDFYMLNKLKNCKLQIGGDDQWGNIVSGVDLVKRKLGTEVFGLTLPLITRSDGKKMGKSEKGAVYLDSKLYSVYDFYQYFRNVPDLDVKKFLYLFTFLEDDEIEHISSFQGYLLNKAKETLAFEITKIVHGESAALKASSAASAAFKGGEGDKSDIPFFKLALTSLEGTILLVDLMVSSKIVSSKSEARRLISSGGVYVDKVRIGDQNYCLNKDSFANGAIELRIGKKKILRIIL.

An L-tyrosine-binding site is contributed by tyrosine 35. Positions 40–49 match the 'HIGH' region motif; the sequence is ATSTSLHIGH. L-tyrosine-binding residues include tyrosine 166 and glutamine 170. A 'KMSKS' region motif is present at residues 226-230; the sequence is KMGKS. Lysine 229 contributes to the ATP binding site. The 65-residue stretch at 341–405 folds into the S4 RNA-binding domain; it reads ILLVDLMVSS…IGKKKILRII (65 aa).

Belongs to the class-I aminoacyl-tRNA synthetase family. TyrS type 1 subfamily. In terms of assembly, homodimer.

The protein resides in the cytoplasm. It carries out the reaction tRNA(Tyr) + L-tyrosine + ATP = L-tyrosyl-tRNA(Tyr) + AMP + diphosphate + H(+). Its function is as follows. Catalyzes the attachment of tyrosine to tRNA(Tyr) in a two-step reaction: tyrosine is first activated by ATP to form Tyr-AMP and then transferred to the acceptor end of tRNA(Tyr). This chain is Tyrosine--tRNA ligase, found in Borrelia hermsii (strain HS1 / DAH).